Reading from the N-terminus, the 493-residue chain is MTELNKLTVADSIKGLKNKDFTSAELIGAHIKQIEKHRNLNAYVTETFDLALKQAEAADQNYAQNNARTLEGIPFAAKDLFCTKGIRTTACSNILKNFIPNYESSVTQNIFDKGGVMLGKTNMDEFAMGSANITSCFGNVISPWKANDDNADLVPGGSSGGSAAAVSGFMASAALGSDTGGSVRQPASFTGLVGFKPTYGRCSRYGMISFASSLDQAGIFTRSVLDSSIMLEAMMGFDEKDSTSIKAEVPELQSAIGSSMKNMKMGVPLSLGEGSIIEPDIMKMWQDTIELLKNAGAEIVDITLPHAKYGVAVYYVIAPAEASSNLSRYDGVRYGLRVERENMTLDEMYEMTRSTGFGEEVKRRIMIGTYVLSSSGMDAYYLKAQKVRRLVANDFNNAFAKVDAILLPTSPTAAFKIGEKQNDPTIMYLNDLFTIPASLAGLPCASVPAGLSARGLPLGIQIIGKQLDEYTVLKVASTIESGVKHIKFEPKGF.

Residues Lys78 and Ser158 each act as charge relay system in the active site. Catalysis depends on Ser182, which acts as the Acyl-ester intermediate.

The protein belongs to the amidase family. GatA subfamily. In terms of assembly, heterotrimer of A, B and C subunits.

The catalysed reaction is L-glutamyl-tRNA(Gln) + L-glutamine + ATP + H2O = L-glutaminyl-tRNA(Gln) + L-glutamate + ADP + phosphate + H(+). Its function is as follows. Allows the formation of correctly charged Gln-tRNA(Gln) through the transamidation of misacylated Glu-tRNA(Gln) in organisms which lack glutaminyl-tRNA synthetase. The reaction takes place in the presence of glutamine and ATP through an activated gamma-phospho-Glu-tRNA(Gln). The polypeptide is Glutamyl-tRNA(Gln) amidotransferase subunit A (Rickettsia rickettsii (strain Iowa)).